We begin with the raw amino-acid sequence, 209 residues long: Uracil phosphoribosyltransferase (209 aa).

Residues Arg-79, Arg-104, and Asp-131 to Ser-139 each bind 5-phospho-alpha-D-ribose 1-diphosphate. Uracil contacts are provided by residues Val-194 and Gly-199–Ala-201. Asp-200 serves as a coordination point for 5-phospho-alpha-D-ribose 1-diphosphate.

Belongs to the UPRTase family. The cofactor is Mg(2+).

The enzyme catalyses UMP + diphosphate = 5-phospho-alpha-D-ribose 1-diphosphate + uracil. The protein operates within pyrimidine metabolism; UMP biosynthesis via salvage pathway; UMP from uracil: step 1/1. Allosterically activated by GTP. Functionally, catalyzes the conversion of uracil and 5-phospho-alpha-D-ribose 1-diphosphate (PRPP) to UMP and diphosphate. The polypeptide is Uracil phosphoribosyltransferase (Clostridium botulinum (strain ATCC 19397 / Type A)).